The primary structure comprises 291 residues: ATP synthase gamma chain (291 aa).

It belongs to the ATPase gamma chain family. F-type ATPases have 2 components, CF(1) - the catalytic core - and CF(0) - the membrane proton channel. CF(1) has five subunits: alpha(3), beta(3), gamma(1), delta(1), epsilon(1). CF(0) has three main subunits: a, b and c.

It localises to the cell inner membrane. In terms of biological role, produces ATP from ADP in the presence of a proton gradient across the membrane. The gamma chain is believed to be important in regulating ATPase activity and the flow of protons through the CF(0) complex. The protein is ATP synthase gamma chain of Neisseria gonorrhoeae (strain NCCP11945).